Here is a 233-residue protein sequence, read N- to C-terminus: Purine nucleoside phosphorylase DeoD-type (233 aa).

Histidine 4 is a binding site for a purine D-ribonucleoside. Residues glycine 20, arginine 24, arginine 43, and arginine 87–threonine 90 each bind phosphate. A purine D-ribonucleoside-binding positions include glutamate 179–glutamate 181 and serine 203–aspartate 204. The Proton donor role is filled by aspartate 204.

This sequence belongs to the PNP/UDP phosphorylase family. Homohexamer; trimer of homodimers.

It carries out the reaction a purine D-ribonucleoside + phosphate = a purine nucleobase + alpha-D-ribose 1-phosphate. It catalyses the reaction a purine 2'-deoxy-D-ribonucleoside + phosphate = a purine nucleobase + 2-deoxy-alpha-D-ribose 1-phosphate. In terms of biological role, catalyzes the reversible phosphorolytic breakdown of the N-glycosidic bond in the beta-(deoxy)ribonucleoside molecules, with the formation of the corresponding free purine bases and pentose-1-phosphate. The protein is Purine nucleoside phosphorylase DeoD-type of Helicobacter pylori (strain J99 / ATCC 700824) (Campylobacter pylori J99).